Here is a 340-residue protein sequence, read N- to C-terminus: Erythroferrone (340 aa).

The first 24 residues, 1–24, serve as a signal peptide directing secretion; it reads MASTRRPVGARTLLACASLLAAMG. Disordered stretches follow at residues 30–63, 79–112, and 141–161; these read SAEP…IAHA, SDKG…GPPG, and HCTR…PAAQ. Residues 40-58 show a composition bias toward pro residues; the sequence is PQPPGAELPAPPANSPPEP. Residues 84–95 are compositionally biased toward basic residues; the sequence is NSKRRSKARRLK. Residues Pro-99, Pro-101, Pro-102, Pro-104, Pro-105, and Pro-107 each carry the hydroxyproline modification. A compositionally biased stretch (pro residues) spans 99–112; the sequence is PGPPGPPGPQGPPG. Residues 145–154 show a composition bias toward polar residues; that stretch reads DLTTPASGSP. A C1q domain is found at 185 to 340; the sequence is APRVEAAFHC…SHFSAILLGL (156 aa). Residues Asn-229, Asn-281, Asn-292, and Asn-319 are each glycosylated (N-linked (GlcNAc...) asparagine).

The protein belongs to the adipolin/erythroferrone family. In terms of assembly, homodimer; disulfide-linked. Forms trimer, hexamers and higher molecular weight oligomers. May form heteromeric complexes with C1QTNF2 and C1QTNF12 and, to a lesser extent, with C1QTNF5 and C1QTNF10. Interacts with BMP5 and BMP7; the interaction inhibits BMP-induced transcription of HAMP. Interacts with BMP6; the interaction inhibits BMP-induced transcription of HAMP. Interacts with BMP2. Interacts with heterodimers composed of BMP2 and BMP6 in vitro, the interaction inhibits the heterodimer binding to its receptor BMPR1A /ALK3 and thereby suppresses expression of HAMP. N-glycosylated; required for secretion of the mature protein. In terms of tissue distribution, expressed in the soleus muscle in the leg (at protein level). Found in blood (at protein level). Weakly expressed in the heart (at protein level). Predominantly expressed in skeletal muscle and, at much lower levels, in other tissues, including lung, eye, smooth muscle, brain and kidney. Within skeletal muscles, higher expression levels in soleus as compared with plantaris. Expressed in osteoblasts, mature osteoclasts and erythroblasts. When fasting, females tend to have higher circulating levels than males. Obese mice tend to have lower expression and circulating levels as compared to lean animals. Following EPO treatment, only expressed in bone marrow and spleen.

Its subcellular location is the secreted. In terms of biological role, iron-regulatory hormone that acts as an erythroid regulator after hemorrhage: produced by erythroblasts following blood loss and mediates suppression of hepcidin (HAMP) expression in the liver, thereby promoting increased iron absorption and mobilization from stores. Promotes lipid uptake into adipocytes and hepatocytes via transcriptional up-regulation of genes involved in fatty acid uptake. Inhibits apoptosis and inflammatory response in cardiomyocytes via promotion of sphingosine-1-phosphate (S1P) and cAMP-dependent activation of AKT signaling. Inhibits autophagy induced by nutrient deficiency in hepatocytes via promoting the phosphorylation of IRS1, AKT, and MTOR, and thereby subsequent activation of the AKT-MTOR signaling pathway. Negatively regulates the differentiation of osteoblasts, potentially via sequestering BMP2, and thereby inhibits the activation of SMAD signaling. The reduction in BMP2 signaling in osteoblasts also results in an increase in expression of the osteoclastogenesis-promoting factors TNFSF11/RANKL and SOST, thereby indirectly promotes bone resorption. The chain is Erythroferrone from Mus musculus (Mouse).